We begin with the raw amino-acid sequence, 497 residues long: Early growth response protein 1-A (497 aa).

Over residues 139-165 the composition is skewed to low complexity; that stretch reads SPSSAPSSSPSSSSSSSSSQSPPLSCS. 3 disordered regions span residues 139-169, 175-194, and 286-309; these read SPSS…VQSN, YSAA…DHSP, and PSRM…YGCP. 3 C2H2-type zinc fingers span residues 306–330, 336–358, and 364–386; these read YGCP…IRIH, FQCR…IRTH, and FACD…TKIH. Positions 377 to 441 are disordered; that stretch reads DERKRHTKIH…SYPSPVHSSF (65 aa). Residues 381 to 391 are compositionally biased toward basic residues; the sequence is RHTKIHLRQKD. The segment covering 397 to 441 has biased composition (low complexity); sequence ATPVSVASPVSSYSPSASTSYPSPVPTSYSSPVSSSYPSPVHSSF.

It belongs to the EGR C2H2-type zinc-finger protein family. Expressed in the presumptive mesoderm. In blastula embryos, expressed in the dorsal marginal zone, and at the onset of gastrulation expression is specific to the Spemann organizer. As gastrulation proceeds, expressed in a ring around the yolk plug. This expression is maintained in advanced gastrulae, with weak expression also extending into the dorsal midline. By the neurula stage, expression is excluded from the notochord. In late tailbud stages, expressed in two spots in the anterior forebrain, which are connected via a bridge of cells that also show expression.

Its subcellular location is the nucleus. It localises to the cytoplasm. Its function is as follows. Transcriptional regulator. Recognizes and binds to the DNA sequence 5'-GCG(T/G)GGGCG-3'(EGR-site) in the promoter region of target genes. Binds double-stranded target DNA, irrespective of the cytosine methylation status. Regulates the transcription of numerous target genes, and thereby plays an important role in regulating the response to growth factors, DNA damage, and ischemia. Plays a role in the regulation of cell survival, proliferation and cell death. Mediates responses to ischemia and hypoxia; regulates the expression of proteins that are involved in inflammatory processes. Plays a role in regulating the expression of circadian clock genes. This chain is Early growth response protein 1-A (egr1-a), found in Xenopus laevis (African clawed frog).